Consider the following 175-residue polypeptide: Peptide deformylase (175 aa).

C99 and H141 together coordinate Fe cation. E142 is an active-site residue. H145 lines the Fe cation pocket.

It belongs to the polypeptide deformylase family. The cofactor is Fe(2+).

The enzyme catalyses N-terminal N-formyl-L-methionyl-[peptide] + H2O = N-terminal L-methionyl-[peptide] + formate. In terms of biological role, removes the formyl group from the N-terminal Met of newly synthesized proteins. Requires at least a dipeptide for an efficient rate of reaction. N-terminal L-methionine is a prerequisite for activity but the enzyme has broad specificity at other positions. This chain is Peptide deformylase, found in Rickettsia canadensis (strain McKiel).